The primary structure comprises 285 residues: GTP cyclohydrolase 1 type 2 homolog (285 aa).

Residues His65, His66, Asp104, His230, and Glu234 each contribute to the a divalent metal cation site.

Belongs to the GTP cyclohydrolase I type 2/NIF3 family. Homohexamer.

In Streptomyces coelicolor (strain ATCC BAA-471 / A3(2) / M145), this protein is GTP cyclohydrolase 1 type 2 homolog.